The following is a 389-amino-acid chain: Chorismate synthase (389 aa).

NADP(+) contacts are provided by arginine 41 and arginine 47. Residues 129-131, 247-248, glycine 291, 306-310, and arginine 332 each bind FMN; these read RSS, NA, and KPIST.

It belongs to the chorismate synthase family. Homotetramer. FMNH2 is required as a cofactor.

The enzyme catalyses 5-O-(1-carboxyvinyl)-3-phosphoshikimate = chorismate + phosphate. The protein operates within metabolic intermediate biosynthesis; chorismate biosynthesis; chorismate from D-erythrose 4-phosphate and phosphoenolpyruvate: step 7/7. Functionally, catalyzes the anti-1,4-elimination of the C-3 phosphate and the C-6 proR hydrogen from 5-enolpyruvylshikimate-3-phosphate (EPSP) to yield chorismate, which is the branch point compound that serves as the starting substrate for the three terminal pathways of aromatic amino acid biosynthesis. This reaction introduces a second double bond into the aromatic ring system. The polypeptide is Chorismate synthase (Rubrobacter xylanophilus (strain DSM 9941 / JCM 11954 / NBRC 16129 / PRD-1)).